The primary structure comprises 314 residues: Acetyl-coenzyme A carboxylase carboxyl transferase subunit alpha (314 aa).

Positions 32–289 (EIDMLEASLE…KSAFVEQLDS (258 aa)) constitute a CoA carboxyltransferase C-terminal domain.

This sequence belongs to the AccA family. In terms of assembly, acetyl-CoA carboxylase is a heterohexamer composed of biotin carboxyl carrier protein (AccB), biotin carboxylase (AccC) and two subunits each of ACCase subunit alpha (AccA) and ACCase subunit beta (AccD).

It localises to the cytoplasm. The catalysed reaction is N(6)-carboxybiotinyl-L-lysyl-[protein] + acetyl-CoA = N(6)-biotinyl-L-lysyl-[protein] + malonyl-CoA. The protein operates within lipid metabolism; malonyl-CoA biosynthesis; malonyl-CoA from acetyl-CoA: step 1/1. Component of the acetyl coenzyme A carboxylase (ACC) complex. First, biotin carboxylase catalyzes the carboxylation of biotin on its carrier protein (BCCP) and then the CO(2) group is transferred by the carboxyltransferase to acetyl-CoA to form malonyl-CoA. This chain is Acetyl-coenzyme A carboxylase carboxyl transferase subunit alpha, found in Staphylococcus aureus (strain bovine RF122 / ET3-1).